Reading from the N-terminus, the 660-residue chain is Bifunctional polymyxin resistance protein ArnA (660 aa).

The segment at 1–304 (MKTVVFAYHD…TLGLVQGSRL (304 aa)) is formyltransferase ArnAFT. 86-88 (HLI) serves as a coordination point for (6R)-10-formyltetrahydrofolate. His-104 acts as the Proton donor; for formyltransferase activity in catalysis. (6R)-10-formyltetrahydrofolate contacts are provided by residues Arg-114 and 136–140 (VTRAD). Positions 314-660 (RRTRVLILGV…RTVDLTDKPS (347 aa)) are dehydrogenase ArnADH. Residues Asp-347 and 368-369 (DI) contribute to the NAD(+) site. UDP-alpha-D-glucuronate contacts are provided by residues Ala-393, Tyr-398, and 432–433 (TS). The active-site Proton acceptor; for decarboxylase activity is Glu-434. Residues Arg-460, Asn-492, 526 to 535 (KLIDGGKQKR), and Tyr-613 each bind UDP-alpha-D-glucuronate. Arg-619 serves as the catalytic Proton donor; for decarboxylase activity.

In the N-terminal section; belongs to the Fmt family. UDP-L-Ara4N formyltransferase subfamily. It in the C-terminal section; belongs to the NAD(P)-dependent epimerase/dehydratase family. UDP-glucuronic acid decarboxylase subfamily. In terms of assembly, homohexamer, formed by a dimer of trimers.

The catalysed reaction is UDP-alpha-D-glucuronate + NAD(+) = UDP-beta-L-threo-pentopyranos-4-ulose + CO2 + NADH. The enzyme catalyses UDP-4-amino-4-deoxy-beta-L-arabinose + (6R)-10-formyltetrahydrofolate = UDP-4-deoxy-4-formamido-beta-L-arabinose + (6S)-5,6,7,8-tetrahydrofolate + H(+). It participates in nucleotide-sugar biosynthesis; UDP-4-deoxy-4-formamido-beta-L-arabinose biosynthesis; UDP-4-deoxy-4-formamido-beta-L-arabinose from UDP-alpha-D-glucuronate: step 1/3. The protein operates within nucleotide-sugar biosynthesis; UDP-4-deoxy-4-formamido-beta-L-arabinose biosynthesis; UDP-4-deoxy-4-formamido-beta-L-arabinose from UDP-alpha-D-glucuronate: step 3/3. It functions in the pathway bacterial outer membrane biogenesis; lipopolysaccharide biosynthesis. In terms of biological role, bifunctional enzyme that catalyzes the oxidative decarboxylation of UDP-glucuronic acid (UDP-GlcUA) to UDP-4-keto-arabinose (UDP-Ara4O) and the addition of a formyl group to UDP-4-amino-4-deoxy-L-arabinose (UDP-L-Ara4N) to form UDP-L-4-formamido-arabinose (UDP-L-Ara4FN). The modified arabinose is attached to lipid A and is required for resistance to polymyxin and cationic antimicrobial peptides. This Shigella dysenteriae serotype 1 (strain Sd197) protein is Bifunctional polymyxin resistance protein ArnA.